Here is a 345-residue protein sequence, read N- to C-terminus: Phosphoribosylformylglycinamidine cyclo-ligase (345 aa).

It belongs to the AIR synthase family.

It localises to the cytoplasm. The catalysed reaction is 2-formamido-N(1)-(5-O-phospho-beta-D-ribosyl)acetamidine + ATP = 5-amino-1-(5-phospho-beta-D-ribosyl)imidazole + ADP + phosphate + H(+). It functions in the pathway purine metabolism; IMP biosynthesis via de novo pathway; 5-amino-1-(5-phospho-D-ribosyl)imidazole from N(2)-formyl-N(1)-(5-phospho-D-ribosyl)glycinamide: step 2/2. The polypeptide is Phosphoribosylformylglycinamidine cyclo-ligase (Staphylococcus carnosus (strain TM300)).